A 670-amino-acid chain; its full sequence is tRNA 5-methylaminomethyl-2-thiouridine biosynthesis bifunctional protein MnmC (670 aa).

Residues 1-242 (MTFSVQHAEI…KRECLSGLKI (242 aa)) form a tRNA (mnm(5)s(2)U34)-methyltransferase region. The tract at residues 269–670 (IGGGIASLCA…KKWLKGSKVE (402 aa)) is FAD-dependent cmnm(5)s(2)U34 oxidoreductase.

This sequence in the N-terminal section; belongs to the methyltransferase superfamily. tRNA (mnm(5)s(2)U34)-methyltransferase family. The protein in the C-terminal section; belongs to the DAO family. FAD is required as a cofactor.

The protein localises to the cytoplasm. The enzyme catalyses 5-aminomethyl-2-thiouridine(34) in tRNA + S-adenosyl-L-methionine = 5-methylaminomethyl-2-thiouridine(34) in tRNA + S-adenosyl-L-homocysteine + H(+). Functionally, catalyzes the last two steps in the biosynthesis of 5-methylaminomethyl-2-thiouridine (mnm(5)s(2)U) at the wobble position (U34) in tRNA. Catalyzes the FAD-dependent demodification of cmnm(5)s(2)U34 to nm(5)s(2)U34, followed by the transfer of a methyl group from S-adenosyl-L-methionine to nm(5)s(2)U34, to form mnm(5)s(2)U34. The chain is tRNA 5-methylaminomethyl-2-thiouridine biosynthesis bifunctional protein MnmC from Haemophilus influenzae (strain PittGG).